We begin with the raw amino-acid sequence, 358 residues long: Chorismate synthase (358 aa).

Position 48 (Arg-48) interacts with NADP(+). FMN-binding positions include 125 to 127 (RAS), Ser-277, 292 to 296 (KPIPS), and Arg-318.

This sequence belongs to the chorismate synthase family. As to quaternary structure, homotetramer. It depends on FMNH2 as a cofactor.

The enzyme catalyses 5-O-(1-carboxyvinyl)-3-phosphoshikimate = chorismate + phosphate. It functions in the pathway metabolic intermediate biosynthesis; chorismate biosynthesis; chorismate from D-erythrose 4-phosphate and phosphoenolpyruvate: step 7/7. Functionally, catalyzes the anti-1,4-elimination of the C-3 phosphate and the C-6 proR hydrogen from 5-enolpyruvylshikimate-3-phosphate (EPSP) to yield chorismate, which is the branch point compound that serves as the starting substrate for the three terminal pathways of aromatic amino acid biosynthesis. This reaction introduces a second double bond into the aromatic ring system. The chain is Chorismate synthase from Desulfatibacillum aliphaticivorans.